A 64-amino-acid chain; its full sequence is Large ribosomal subunit protein uL29 (64 aa).

Belongs to the universal ribosomal protein uL29 family.

This Acaryochloris marina (strain MBIC 11017) protein is Large ribosomal subunit protein uL29.